A 614-amino-acid chain; its full sequence is Pentatricopeptide repeat-containing protein At1g63080, mitochondrial (614 aa).

The N-terminal 7 residues, 1-7 (MSLAKRF), are a transit peptide targeting the mitochondrion. PPR repeat units lie at residues 64 to 98 (SIVE…GVSH), 99 to 133 (NLYT…GYGP), 134 to 168 (SIVT…GYQP), 169 to 203 (DTVT…GCQP), 204 to 238 (DLVT…KIEA), 239 to 273 (DVVI…GIRP), 274 to 308 (DVFT…KINP), 309 to 343 (NVVT…SIDP), 344 to 378 (NIVT…DCLP), 379 to 413 (DVVT…GLVG), 414 to 448 (NTVT…GVHP), 449 to 483 (NIMT…KMEP), 484 to 518 (DIYT…GVKP), 519 to 553 (DVIA…GPLP), and 554 to 588 (DSGT…RFAG).

The protein belongs to the PPR family. P subfamily.

It localises to the mitochondrion. This chain is Pentatricopeptide repeat-containing protein At1g63080, mitochondrial, found in Arabidopsis thaliana (Mouse-ear cress).